Reading from the N-terminus, the 273-residue chain is Putative pyruvate, phosphate dikinase regulatory protein (273 aa).

ADP is bound at residue Gly149 to Thr156.

This sequence belongs to the pyruvate, phosphate/water dikinase regulatory protein family. PDRP subfamily.

It carries out the reaction N(tele)-phospho-L-histidyl/L-threonyl-[pyruvate, phosphate dikinase] + ADP = N(tele)-phospho-L-histidyl/O-phospho-L-threonyl-[pyruvate, phosphate dikinase] + AMP + H(+). It catalyses the reaction N(tele)-phospho-L-histidyl/O-phospho-L-threonyl-[pyruvate, phosphate dikinase] + phosphate + H(+) = N(tele)-phospho-L-histidyl/L-threonyl-[pyruvate, phosphate dikinase] + diphosphate. Bifunctional serine/threonine kinase and phosphorylase involved in the regulation of the pyruvate, phosphate dikinase (PPDK) by catalyzing its phosphorylation/dephosphorylation. The sequence is that of Putative pyruvate, phosphate dikinase regulatory protein from Rickettsia africae (strain ESF-5).